A 64-amino-acid polypeptide reads, in one-letter code: Small ribosomal subunit protein bS21 (64 aa).

This sequence belongs to the bacterial ribosomal protein bS21 family.

The polypeptide is Small ribosomal subunit protein bS21 (Flavobacterium johnsoniae (strain ATCC 17061 / DSM 2064 / JCM 8514 / BCRC 14874 / CCUG 350202 / NBRC 14942 / NCIMB 11054 / UW101) (Cytophaga johnsonae)).